The chain runs to 149 residues: D-aminoacyl-tRNA deacylase (149 aa).

The Gly-cisPro motif, important for rejection of L-amino acids motif lies at 137–138 (GP).

It belongs to the DTD family. In terms of assembly, homodimer.

It is found in the cytoplasm. It catalyses the reaction glycyl-tRNA(Ala) + H2O = tRNA(Ala) + glycine + H(+). It carries out the reaction a D-aminoacyl-tRNA + H2O = a tRNA + a D-alpha-amino acid + H(+). Its function is as follows. An aminoacyl-tRNA editing enzyme that deacylates mischarged D-aminoacyl-tRNAs. Also deacylates mischarged glycyl-tRNA(Ala), protecting cells against glycine mischarging by AlaRS. Acts via tRNA-based rather than protein-based catalysis; rejects L-amino acids rather than detecting D-amino acids in the active site. By recycling D-aminoacyl-tRNA to D-amino acids and free tRNA molecules, this enzyme counteracts the toxicity associated with the formation of D-aminoacyl-tRNA entities in vivo and helps enforce protein L-homochirality. The sequence is that of D-aminoacyl-tRNA deacylase from Syntrophus aciditrophicus (strain SB).